The following is a 228-amino-acid chain: Ion-translocating oxidoreductase complex subunit E (228 aa).

The next 5 membrane-spanning stretches (helical) occupy residues 24–44 (LLGLCPLLAISGTVVNALGLG), 73–93 (VFVLIIASVVTAIELAMNAFF), 95–115 (ELYLILGIFIPLIVTNCAIIG), 130–150 (LADGLAMGLGFTCVLVALGAL), and 184–204 (GFLLALLPPGAFIALGLLIAL).

It belongs to the NqrDE/RnfAE family. In terms of assembly, the complex is composed of six subunits: RnfA, RnfB, RnfC, RnfD, RnfE and RnfG.

Its subcellular location is the cell inner membrane. Functionally, part of a membrane-bound complex that couples electron transfer with translocation of ions across the membrane. In Thioalkalivibrio sulfidiphilus (strain HL-EbGR7), this protein is Ion-translocating oxidoreductase complex subunit E.